Consider the following 444-residue polypeptide: Methylenetetrahydrofolate--tRNA-(uracil-5-)-methyltransferase TrmFO (444 aa).

10 to 15 (GAGLAG) is an FAD binding site.

The protein belongs to the MnmG family. TrmFO subfamily. FAD is required as a cofactor.

The protein resides in the cytoplasm. It catalyses the reaction uridine(54) in tRNA + (6R)-5,10-methylene-5,6,7,8-tetrahydrofolate + NADH + H(+) = 5-methyluridine(54) in tRNA + (6S)-5,6,7,8-tetrahydrofolate + NAD(+). It carries out the reaction uridine(54) in tRNA + (6R)-5,10-methylene-5,6,7,8-tetrahydrofolate + NADPH + H(+) = 5-methyluridine(54) in tRNA + (6S)-5,6,7,8-tetrahydrofolate + NADP(+). Functionally, catalyzes the folate-dependent formation of 5-methyl-uridine at position 54 (M-5-U54) in all tRNAs. The protein is Methylenetetrahydrofolate--tRNA-(uracil-5-)-methyltransferase TrmFO of Streptococcus suis (strain 98HAH33).